Consider the following 469-residue polypeptide: Cell division protein FtsP (469 aa).

The segment at residues 1–29 (MPRLSRRQLLKTAAISTALSTVPAPLLAA) is a signal peptide (tat-type signal). Residues 228 to 286 (IRLRLLNASLARAYDLRLDNDQEMLLIAQDLSFLPKAKSVKSLVLSPGERAEILVNMNE) enclose the Plastocyanin-like domain.

This sequence belongs to the FtsP family. In terms of processing, predicted to be exported by the Tat system. The position of the signal peptide cleavage has not been experimentally proven.

Its subcellular location is the periplasm. Functionally, cell division protein that is required for growth during stress conditions. May be involved in protecting or stabilizing the divisomal assembly under conditions of stress. The chain is Cell division protein FtsP from Haemophilus influenzae (strain 86-028NP).